Reading from the N-terminus, the 365-residue chain is tRNA 2-selenouridine synthase (365 aa).

The region spanning 15–138 is the Rhodanese domain; that stretch reads FIAGQPLIDL…MRQYLIGVIE (124 aa). Cysteine 98 serves as the catalytic S-selanylcysteine intermediate.

The protein belongs to the SelU family. As to quaternary structure, monomer.

The enzyme catalyses 5-methylaminomethyl-2-thiouridine(34) in tRNA + selenophosphate + (2E)-geranyl diphosphate + H2O + H(+) = 5-methylaminomethyl-2-selenouridine(34) in tRNA + (2E)-thiogeraniol + phosphate + diphosphate. The catalysed reaction is 5-methylaminomethyl-2-thiouridine(34) in tRNA + (2E)-geranyl diphosphate = 5-methylaminomethyl-S-(2E)-geranyl-thiouridine(34) in tRNA + diphosphate. It carries out the reaction 5-methylaminomethyl-S-(2E)-geranyl-thiouridine(34) in tRNA + selenophosphate + H(+) = 5-methylaminomethyl-2-(Se-phospho)selenouridine(34) in tRNA + (2E)-thiogeraniol. It catalyses the reaction 5-methylaminomethyl-2-(Se-phospho)selenouridine(34) in tRNA + H2O = 5-methylaminomethyl-2-selenouridine(34) in tRNA + phosphate. Involved in the post-transcriptional modification of the uridine at the wobble position (U34) of tRNA(Lys), tRNA(Glu) and tRNA(Gln). Catalyzes the conversion of 2-thiouridine (S2U-RNA) to 2-selenouridine (Se2U-RNA). Acts in a two-step process involving geranylation of 2-thiouridine (S2U) to S-geranyl-2-thiouridine (geS2U) and subsequent selenation of the latter derivative to 2-selenouridine (Se2U) in the tRNA chain. The polypeptide is tRNA 2-selenouridine synthase (Shewanella sp. (strain ANA-3)).